Consider the following 79-residue polypeptide: Small ribosomal subunit protein bS16 (79 aa).

This sequence belongs to the bacterial ribosomal protein bS16 family.

The chain is Small ribosomal subunit protein bS16 from Oleidesulfovibrio alaskensis (strain ATCC BAA-1058 / DSM 17464 / G20) (Desulfovibrio alaskensis).